A 225-amino-acid polypeptide reads, in one-letter code: Single-pass membrane and coiled-coil domain-containing protein 3 (225 aa).

The stretch at 62-92 (IKENCDLIIQAIMKIQKELQKVDEALKDKLE) forms a coiled coil. The helical transmembrane segment at 155-175 (IGASLLGSIGVAVLGLGIDMI) threads the bilayer. A coiled-coil region spans residues 183–207 (VEKTQLQAAIKSYEKHLVEFKSASE).

Its subcellular location is the membrane. In Homo sapiens (Human), this protein is Single-pass membrane and coiled-coil domain-containing protein 3 (SMCO3).